The following is a 148-amino-acid chain: uncharacterized protein (148 aa).

Residues 1-144 form the N-acetyltransferase domain; that stretch reads MNIKRITTEA…PHVLMTKEIS (144 aa).

This is an uncharacterized protein from Bacillus subtilis (strain 168).